We begin with the raw amino-acid sequence, 93 residues long: Signal recognition particle 19 kDa protein (93 aa).

The protein belongs to the SRP19 family. Part of the signal recognition particle protein translocation system, which is composed of SRP and FtsY. Archaeal SRP consists of a 7S RNA molecule of 300 nucleotides and two protein subunits: SRP54 and SRP19.

Its subcellular location is the cytoplasm. Its function is as follows. Involved in targeting and insertion of nascent membrane proteins into the cytoplasmic membrane. Binds directly to 7S RNA and mediates binding of the 54 kDa subunit of the SRP. This Haloquadratum walsbyi (strain DSM 16790 / HBSQ001) protein is Signal recognition particle 19 kDa protein.